The primary structure comprises 606 residues: Retrovirus-related Pol polyprotein from type-1 retrotransposable element R2 (606 aa).

A Reverse transcriptase domain is found at 1 to 208 (GTLANIIMLE…NTFKYLGLTF (208 aa)). Positions 331–606 (IFNIEGPARS…PPDPPRPVPP (276 aa)) are nucleic acid-binding endonuclease.

It carries out the reaction DNA(n) + a 2'-deoxyribonucleoside 5'-triphosphate = DNA(n+1) + diphosphate. The sequence is that of Retrovirus-related Pol polyprotein from type-1 retrotransposable element R2 from Popillia japonica (Japanese beetle).